The following is a 180-amino-acid chain: Large ribosomal subunit protein uL5 (180 aa).

Belongs to the universal ribosomal protein uL5 family. Part of the 50S ribosomal subunit; part of the 5S rRNA/L5/L18/L25 subcomplex. Contacts the 5S rRNA and the P site tRNA. Forms a bridge to the 30S subunit in the 70S ribosome.

Its function is as follows. This is one of the proteins that bind and probably mediate the attachment of the 5S RNA into the large ribosomal subunit, where it forms part of the central protuberance. In the 70S ribosome it contacts protein S13 of the 30S subunit (bridge B1b), connecting the 2 subunits; this bridge is implicated in subunit movement. Contacts the P site tRNA; the 5S rRNA and some of its associated proteins might help stabilize positioning of ribosome-bound tRNAs. This Chloroflexus aurantiacus (strain ATCC 29364 / DSM 637 / Y-400-fl) protein is Large ribosomal subunit protein uL5.